A 1328-amino-acid chain; its full sequence is WASH complex subunit 2 (1328 aa).

The tract at residues 1 to 219 is sufficient for interaction with WASHC3, WASHC4 and WASHC5; required for interaction with WASHC1; that stretch reads MNRTSPDSEQ…VGSDRGSIVD (219 aa). Phosphoserine occurs at positions 157, 159, 204, 205, and 209. A compositionally biased stretch (low complexity) spans 201–213; sequence GELSSEEGSVGSD. Disordered stretches follow at residues 201-655 and 675-830; these read GELS…KTNL and KKTQ…PKST. Composition is skewed to acidic residues over residues 219 to 231 and 248 to 273; these read DSED…ESDD and SDEE…EDIE. Ser283 carries the phosphoserine modification. Over residues 288–323 the composition is skewed to basic and acidic residues; it reads LAARIKGDVSNQRKEGHTDGKPQRTVKEKKERRTPA. Thr321 carries the phosphothreonine modification. A sufficient for interaction with CCDC93 region spans residues 346 to 592; that stretch reads SRGGLFSDRQ…QTSSLPPQSQ (247 aa). The tract at residues 347–1328 is interaction with VPS35; that stretch reads RGGLFSDRQG…DDPLNAFGSQ (982 aa). An LFa 1 motif is present at residues 357–367; it reads LFDDDDESDLF. 2 positions are modified to phosphoserine: Ser384 and Ser387. 2 short sequence motifs (LFa) span residues 440–455 and 474–483; these read LFDD…DNFF and IFDDDEGDLF. Residues 441–453 are compositionally biased toward acidic residues; the sequence is FDDDDNDSDEDDN. The span at 508-528 shows a compositional bias: polar residues; it reads TITLPSSKNPKLVSETKTQKG. 2 consecutive short sequence motifs (LFa) follow at residues 529–540 and 564–575; these read LFSDEEDSEDLF and LFGDEDEEDNLF. Phosphoserine is present on residues Ser531 and Ser536. The segment covering 539 to 556 has biased composition (low complexity); it reads LFSSQSSSKTKSASVLSS. Positions 582 to 592 are enriched in polar residues; it reads KQTSSLPPQSQ. 2 positions are modified to phosphoserine: Ser610 and Ser611. A compositionally biased stretch (basic and acidic residues) spans 627-638; that stretch reads ASERKSKGERWD. 2 consecutive short sequence motifs (LFa) follow at residues 655-667 and 683-695; these read LFEE…VDLF and LFED…SSLF. A compositionally biased stretch (polar residues) spans 690 to 699; the sequence is SGSSLFSLPP. Phosphoserine occurs at positions 720, 744, 749, 780, and 795. Over residues 797–808 the composition is skewed to acidic residues; that stretch reads FDEDEDKVEDDS. 2 consecutive short sequence motifs (LFa) follow at residues 832-840 and 849-855; these read VFQDEELLF and DPDVDLF. 2 disordered regions span residues 863 to 940 and 991 to 1088; these read LSMP…EPSS and PTLP…AMAV. 2 positions are modified to phosphoserine: Ser867 and Ser870. Positions 871–881 match the LFa 10 motif; that stretch reads LFGDDDDDDLF. The span at 894–919 shows a compositional bias: basic and acidic residues; sequence PEKKGTLRKDHKPPELTEGSKEKSTW. Residues 925 to 1328 form an interaction with phospholipids region; the sequence is QDSSGLTPFK…DDPLNAFGSQ (404 aa). Positions 1016–1034 are enriched in basic residues; sequence NKGRVKVRGKRRPQTRAAR. Residues 1017 to 1035 form a required for interaction with F-actin-capping protein subunit alpha (CAPZA1 or CAPZA2 or CAPZA3) region; it reads KGRVKVRGKRRPQTRAARR. Residues Ser1042, Ser1060, Ser1077, and Ser1102 each carry the phosphoserine modification. The disordered stretch occupies residues 1115-1210; sequence AHLFDSGDIF…KKNQWKSDSH (96 aa). Short sequence motifs (LFa) lie at residues 1117–1124, 1157–1171, and 1187–1195; these read LFDSGDIF, VFPD…DDLF, and LLEDEEDLF. Phosphoserine is present on residues Ser1162 and Ser1165. Residues 1196–1210 show a composition bias toward basic and acidic residues; the sequence is ADQKGKKNQWKSDSH. 3 short sequence motifs (LFa) span residues 1220–1226, 1249–1257, and 1277–1286; these read IFEDDIF, LFDDNIDIF, and MFDDDTDDIF. A disordered region spans residues 1289-1310; that stretch reads GLQAKASKPKSQSAEAVSELRS. The LFa 17 motif lies at 1317-1325; sequence IFDDPLNAF. Residue Ser1327 is modified to Phosphoserine.

The protein belongs to the FAM21 family. Component of the WASH core complex also described as WASH regulatory complex (SHRC) composed of WASHC1, WASHC2, WASHC3, WASHC4 and WASHC5; in the complex interacts (via N-terminus) directly with WASHC1. The WASH core complex associates with the F-actin-capping protein dimer (formed by CAPZA1, CAPZA2 or CAPZA3 and CAPZB) in a transient or substoichiometric manner which was initially described as WASH complex. Interacts with VPS35; mediates the association with the retromer CSC complex. Interacts with FKBP15. Interacts with CCDC93, CCDC22, VPS35L; indicative for an association of the WASH core complex with the CCC and retriever complexes. Directly interacts with TBC1D23.

Its subcellular location is the early endosome membrane. The protein resides in the cell membrane. In terms of biological role, acts as a component of the WASH core complex that functions as a nucleation-promoting factor (NPF) at the surface of endosomes, where it recruits and activates the Arp2/3 complex to induce actin polymerization, playing a key role in the fission of tubules that serve as transport intermediates during endosome sorting. Mediates the recruitment of the WASH core complex to endosome membranes via binding to phospholipids and VPS35 of the retromer CSC. Mediates the recruitment of the F-actin-capping protein dimer to the WASH core complex probably promoting localized F-actin polymerization needed for vesicle scission. Via its C-terminus binds various phospholipids, most strongly phosphatidylinositol 4-phosphate (PtdIns-(4)P), phosphatidylinositol 5-phosphate (PtdIns-(5)P) and phosphatidylinositol 3,5-bisphosphate (PtdIns-(3,5)P2). Involved in the endosome-to-plasma membrane trafficking and recycling of SNX27-retromer-dependent cargo proteins, such as GLUT1. Required for the association of DNAJC13, ENTR1, ANKRD50 with retromer CSC subunit VPS35. Required for the endosomal recruitment of CCC and retriever complexes subunits COMMD1 and CCDC93 as well as the retrievere complex subunit VPS35L. In Rattus norvegicus (Rat), this protein is WASH complex subunit 2.